Consider the following 416-residue polypeptide: Histidinol dehydrogenase (416 aa).

NAD(+) is bound by residues tyrosine 117, glutamine 178, and asparagine 201. Substrate-binding residues include threonine 224, glutamine 246, and histidine 249. Zn(2+) is bound by residues glutamine 246 and histidine 249. Catalysis depends on proton acceptor residues glutamate 314 and histidine 315. The substrate site is built by histidine 315, aspartate 348, glutamate 402, and histidine 407. Aspartate 348 is a binding site for Zn(2+). Position 407 (histidine 407) interacts with Zn(2+).

The protein belongs to the histidinol dehydrogenase family. Requires Zn(2+) as cofactor.

It carries out the reaction L-histidinol + 2 NAD(+) + H2O = L-histidine + 2 NADH + 3 H(+). Its pathway is amino-acid biosynthesis; L-histidine biosynthesis; L-histidine from 5-phospho-alpha-D-ribose 1-diphosphate: step 9/9. Functionally, catalyzes the sequential NAD-dependent oxidations of L-histidinol to L-histidinaldehyde and then to L-histidine. The protein is Histidinol dehydrogenase of Staphylococcus aureus (strain bovine RF122 / ET3-1).